The primary structure comprises 111 residues: ATP-dependent Clp protease adapter protein ClpS (111 aa).

Belongs to the ClpS family. In terms of assembly, binds to the N-terminal domain of the chaperone ClpA.

Its function is as follows. Involved in the modulation of the specificity of the ClpAP-mediated ATP-dependent protein degradation. This is ATP-dependent Clp protease adapter protein ClpS from Legionella pneumophila (strain Corby).